The chain runs to 188 residues: MIAFVGLGNPGKEYEKTRHNVGFMTIDELSKKWDIPLNQSKFHGQFGTGFVSGQKVLLVKPLTYMNLSGECVRPLMDYYDIPLEHLKVIYDDLDLPTGRIRLRTKGSAGGHNGIKSLIQHLGSPEFDRFRIGIGRPQNGMKVVDYVLGRFSEEEQPDIASAIQASVEACEAALTKPFLEVMNDFNKKV.

Tyrosine 14 is a tRNA binding site. Histidine 19 acts as the Proton acceptor in catalysis. Residues tyrosine 64, asparagine 66, and asparagine 112 each contribute to the tRNA site.

Belongs to the PTH family. Monomer.

It localises to the cytoplasm. It catalyses the reaction an N-acyl-L-alpha-aminoacyl-tRNA + H2O = an N-acyl-L-amino acid + a tRNA + H(+). Its function is as follows. Hydrolyzes ribosome-free peptidyl-tRNAs (with 1 or more amino acids incorporated), which drop off the ribosome during protein synthesis, or as a result of ribosome stalling. In terms of biological role, catalyzes the release of premature peptidyl moieties from peptidyl-tRNA molecules trapped in stalled 50S ribosomal subunits, and thus maintains levels of free tRNAs and 50S ribosomes. In Bacillus pumilus (strain SAFR-032), this protein is Peptidyl-tRNA hydrolase.